The chain runs to 305 residues: GTPase Era (305 aa).

The Era-type G domain occupies Arg-13–Glu-181. Positions Gly-21–Ser-28 are G1. Gly-21 to Ser-28 contacts GTP. Positions Gln-47–His-51 are G2. Residues Asp-68–Gly-71 are G3. GTP contacts are provided by residues Asp-68 to Met-72 and Asn-130 to Asp-133. The G4 stretch occupies residues Asn-130–Asp-133. Residues Leu-160–Ala-162 form a G5 region. Residues Val-204–Arg-288 enclose the KH type-2 domain.

This sequence belongs to the TRAFAC class TrmE-Era-EngA-EngB-Septin-like GTPase superfamily. Era GTPase family. In terms of assembly, monomer.

The protein localises to the cytoplasm. It is found in the cell inner membrane. In terms of biological role, an essential GTPase that binds both GDP and GTP, with rapid nucleotide exchange. Plays a role in 16S rRNA processing and 30S ribosomal subunit biogenesis and possibly also in cell cycle regulation and energy metabolism. The polypeptide is GTPase Era (Marinobacter nauticus (strain ATCC 700491 / DSM 11845 / VT8) (Marinobacter aquaeolei)).